Consider the following 175-residue polypeptide: Ribosome maturation factor RimM (175 aa).

A PRC barrel domain is found at 96–175; it reads EDEFYWRELF…RIEVDWDPGF (80 aa).

This sequence belongs to the RimM family. Binds ribosomal protein uS19.

It is found in the cytoplasm. Its function is as follows. An accessory protein needed during the final step in the assembly of 30S ribosomal subunit, possibly for assembly of the head region. Essential for efficient processing of 16S rRNA. May be needed both before and after RbfA during the maturation of 16S rRNA. It has affinity for free ribosomal 30S subunits but not for 70S ribosomes. This Aliivibrio fischeri (strain ATCC 700601 / ES114) (Vibrio fischeri) protein is Ribosome maturation factor RimM.